An 861-amino-acid chain; its full sequence is ToMV resistant protein Tm-2 netted virescent (861 aa).

The stretch at 63–83 forms a coiled coil; that stretch reads VKNLLKDIQELAGDVEDLLDD. In terms of domain architecture, NB-ARC spans 162–388; it reads DDFNMLQAKL…LESMGHKVQD (227 aa). Position 185–192 (185–192) interacts with ATP; sequence GMPGLGKT. 13 LRR repeats span residues 225-248, 305-327, 388-411, 449-472, 510-536, 585-608, 609-631, 652-680, 689-710, 712-735, 736-758, 784-807, and 810-835; these read LDIA…NLRS, LHAL…IFNF, DGCA…CFLY, LAED…TYNG, VARL…KLEK, MTCL…IVKL, TRLE…VWES, ISSF…FFEP, LRKL…IFSP, LKAL…LSSY, PHIA…SFPP, LRKL…EANG, and FPQL…DVSM.

This sequence belongs to the disease resistance NB-LRR family. (Microbial infection) Interacts with tobamoviruses mouvement protein at the plasma membrane; this interaction triggers defense responses leading to programmed cell death. In terms of assembly, binds to HSP90 proteins; this interaction seems required for defense responses toward tobamoviruses.

The protein localises to the cell membrane. Its function is as follows. Inhibitor of viral mouvements which confers resistance to some tobamoviruses including tomato mosaic virus (ToMV) (e.g. isolate L and W3) and tobacco mosaic virus (TMV), but not to resistance-breaking isolates (e.g. Ltbl) ToMV and tomato brown rugose fruit virus (ToBRFV). Elicits a hypersensitive reaction in response to avirulent (Avr) movement proteins from resistance inducing tobamoviruses (e.g. ToMV and TMV) strains, thus leading to programmed cell death. In Solanum lycopersicum (Tomato), this protein is ToMV resistant protein Tm-2 netted virescent.